We begin with the raw amino-acid sequence, 49 residues long: Large ribosomal subunit protein bL33A (49 aa).

This sequence belongs to the bacterial ribosomal protein bL33 family.

This Mycoplasmopsis agalactiae (strain NCTC 10123 / CIP 59.7 / PG2) (Mycoplasma agalactiae) protein is Large ribosomal subunit protein bL33A.